Here is a 302-residue protein sequence, read N- to C-terminus: Putative S-adenosyl-L-methionine-dependent methyltransferase MAP_1622c (302 aa).

S-adenosyl-L-methionine contacts are provided by residues D129 and D158 to L159.

This sequence belongs to the UPF0677 family.

In terms of biological role, exhibits S-adenosyl-L-methionine-dependent methyltransferase activity. The polypeptide is Putative S-adenosyl-L-methionine-dependent methyltransferase MAP_1622c (Mycolicibacterium paratuberculosis (strain ATCC BAA-968 / K-10) (Mycobacterium paratuberculosis)).